A 421-amino-acid chain; its full sequence is Imidazolonepropionase (421 aa).

Fe(3+) contacts are provided by histidine 81 and histidine 83. Zn(2+)-binding residues include histidine 81 and histidine 83. 4-imidazolone-5-propanoate-binding residues include arginine 90, tyrosine 153, and histidine 186. Tyrosine 153 provides a ligand contact to N-formimidoyl-L-glutamate. Histidine 251 lines the Fe(3+) pocket. Histidine 251 provides a ligand contact to Zn(2+). Glutamate 254 is a 4-imidazolone-5-propanoate binding site. Aspartate 326 contributes to the Fe(3+) binding site. A Zn(2+)-binding site is contributed by aspartate 326. Residues asparagine 328 and glycine 330 each contribute to the N-formimidoyl-L-glutamate site. Serine 331 provides a ligand contact to 4-imidazolone-5-propanoate.

Belongs to the metallo-dependent hydrolases superfamily. HutI family. Zn(2+) is required as a cofactor. Fe(3+) serves as cofactor.

The protein resides in the cytoplasm. It catalyses the reaction 4-imidazolone-5-propanoate + H2O = N-formimidoyl-L-glutamate. Its pathway is amino-acid degradation; L-histidine degradation into L-glutamate; N-formimidoyl-L-glutamate from L-histidine: step 3/3. Catalyzes the hydrolytic cleavage of the carbon-nitrogen bond in imidazolone-5-propanoate to yield N-formimidoyl-L-glutamate. It is the third step in the universal histidine degradation pathway. The protein is Imidazolonepropionase of Streptococcus pyogenes serotype M28 (strain MGAS6180).